The chain runs to 363 residues: Chorismate synthase (363 aa).

Positions 48 and 54 each coordinate NADP(+). Residues 125–127 (RSS), 237–238 (NA), G277, 292–296 (KPTSS), and R318 contribute to the FMN site.

The protein belongs to the chorismate synthase family. Homotetramer. FMNH2 is required as a cofactor.

The enzyme catalyses 5-O-(1-carboxyvinyl)-3-phosphoshikimate = chorismate + phosphate. Its pathway is metabolic intermediate biosynthesis; chorismate biosynthesis; chorismate from D-erythrose 4-phosphate and phosphoenolpyruvate: step 7/7. In terms of biological role, catalyzes the anti-1,4-elimination of the C-3 phosphate and the C-6 proR hydrogen from 5-enolpyruvylshikimate-3-phosphate (EPSP) to yield chorismate, which is the branch point compound that serves as the starting substrate for the three terminal pathways of aromatic amino acid biosynthesis. This reaction introduces a second double bond into the aromatic ring system. This Pseudomonas putida (strain GB-1) protein is Chorismate synthase.